An 86-amino-acid polypeptide reads, in one-letter code: Small ribosomal subunit protein uS17 (86 aa).

This sequence belongs to the universal ribosomal protein uS17 family. Part of the 30S ribosomal subunit.

Its function is as follows. One of the primary rRNA binding proteins, it binds specifically to the 5'-end of 16S ribosomal RNA. The polypeptide is Small ribosomal subunit protein uS17 (Dehalococcoides mccartyi (strain ATCC BAA-2266 / KCTC 15142 / 195) (Dehalococcoides ethenogenes (strain 195))).